The primary structure comprises 386 residues: Lycopene beta-cyclase (386 aa).

Asp3–Glu33 is a binding site for NAD(+).

The protein belongs to the lycopene cyclase family. Requires FAD as cofactor.

It catalyses the reaction a carotenoid psi-end group = a carotenoid beta-end derivative. It carries out the reaction all-trans-lycopene = gamma-carotene. The enzyme catalyses gamma-carotene = all-trans-beta-carotene. The protein operates within carotenoid biosynthesis; beta-carotene biosynthesis. In terms of biological role, catalyzes the double cyclization reaction which converts lycopene to beta-carotene. The polypeptide is Lycopene beta-cyclase (Pseudescherichia vulneris (Escherichia vulneris)).